The following is a 138-amino-acid chain: Large ribosomal subunit protein uL16 (138 aa).

A compositionally biased stretch (basic residues) spans 1 to 13; that stretch reads MLQPARRKYRKEQ. The interval 1–20 is disordered; the sequence is MLQPARRKYRKEQKGRNTGV.

This sequence belongs to the universal ribosomal protein uL16 family. As to quaternary structure, part of the 50S ribosomal subunit.

In terms of biological role, binds 23S rRNA and is also seen to make contacts with the A and possibly P site tRNAs. The polypeptide is Large ribosomal subunit protein uL16 (Verminephrobacter eiseniae (strain EF01-2)).